A 345-amino-acid polypeptide reads, in one-letter code: cAMP-responsive element modulator (345 aa).

Positions 88–147 (VQVAAIAETDESAESEGVIDSHKRREILSRRPSYRKILNELSSDVPGVPKIEEERSEEEG) constitute a KID domain. A phosphoserine mark is found at Ser-102, Ser-129, Ser-271, Ser-274, and Ser-277. The region spanning 286-345 (TRKRELRLMKNREAAKECRRRKKEYVKCLESRVAVLEVQNKKLIEELETLKDICSPKTDY) is the bZIP domain. Positions 287-312 (RKRELRLMKNREAAKECRRRKKEYVK) are basic motif. A leucine-zipper region spans residues 314-335 (LESRVAVLEVQNKKLIEELETL).

This sequence belongs to the bZIP family. Binds DNA as a dimer. Interacts with FHL5. Interacts with CDC34. May interact with TSSK4. Post-translationally, isoform 9 is ubiquitinated by CDC34 and RAD6B in order to be degraded by the proteasome. In terms of processing, stimulated by phosphorylation. Phosphorylated on Ser-116 by TSSK4 in vitro. As to expression, expressed in testes (round spermatids) (at protein level). Isoform 14 is the major activator form in testes.

It localises to the nucleus. Its subcellular location is the cytoplasm. Its function is as follows. Transcriptional regulator that binds the cAMP response element (CRE), a sequence present in many viral and cellular promoters. Isoforms are either transcriptional activators or repressors. Plays a role in spermatogenesis and is involved in spermatid maturation. Functionally, may play a role in the regulation of the circadian clock: acts as a transcriptional repressor of the core circadian component PER1 by directly binding to cAMP response elements in its promoter. This is cAMP-responsive element modulator from Homo sapiens (Human).